The chain runs to 239 residues: Serine protease SplC (239 aa).

An N-terminal signal peptide occupies residues 1–36; that stretch reads MNKNIVIKSMAALAILTSATGINAAVVEETQQIANA. Residues His-75, Asp-113, and Ser-193 each act as charge relay system in the active site.

It belongs to the peptidase S1B family.

Its subcellular location is the secreted. The polypeptide is Serine protease SplC (splC) (Staphylococcus aureus (strain MSSA476)).